We begin with the raw amino-acid sequence, 445 residues long: Anaerobilin synthase (445 aa).

One can recognise a Radical SAM core domain in the interval 52 to 287; that stretch reads TASPRKRLVY…LQGCDFMDDA (236 aa). Y61 serves as a coordination point for S-adenosyl-L-methionine. [4Fe-4S] cluster contacts are provided by C67 and C71. An S-adenosyl-L-methionine-binding site is contributed by F73. [4Fe-4S] cluster is bound at residue C74. Residues G118, 119-120, E151, Q178, R190, and D215 contribute to the S-adenosyl-L-methionine site; that span reads GT.

The protein belongs to the anaerobic coproporphyrinogen-III oxidase family. ChuW/HutW subfamily. The cofactor is [4Fe-4S] cluster.

The enzyme catalyses 2 reduced [flavodoxin] + heme b + 2 S-adenosyl-L-methionine = anaerobilin + 2 oxidized [flavodoxin] + Fe(2+) + 5'-deoxyadenosine + L-methionine + S-adenosyl-L-homocysteine. Inhibited by exposure to molecular oxygen. In terms of biological role, involved in heme degradation and iron utilization under anaerobic conditions. Catalyzes a radical-mediated mechanism facilitating iron liberation and the production of the tetrapyrrole product anaerobilin. Can use heme, mesoheme and deuteroheme as substrates. This is Anaerobilin synthase from Escherichia coli O157:H7.